The sequence spans 34 residues: Photosystem I reaction center subunit XII (34 aa).

A helical membrane pass occupies residues 5–25 (ISSPEIFIALVVAAHAAILAL).

Belongs to the PsaM family.

Its subcellular location is the cellular thylakoid membrane. The polypeptide is Photosystem I reaction center subunit XII (Synechococcus sp. (strain CC9902)).